The chain runs to 243 residues: uncharacterized protein (243 aa).

Residues 26–204 (RVGLVLDITG…ISDDELYDAL (179 aa)) enclose the VWFA domain. Residues 222–243 (REQEPPAEKPKKKGFFSRLFSK) form a disordered region. Basic residues predominate over residues 231–243 (PKKKGFFSRLFSK).

This is an uncharacterized protein from Bacillus subtilis (strain 168).